The primary structure comprises 378 residues: Lipid-A-disaccharide synthase (378 aa).

Belongs to the LpxB family.

The enzyme catalyses a lipid X + a UDP-2-N,3-O-bis[(3R)-3-hydroxyacyl]-alpha-D-glucosamine = a lipid A disaccharide + UDP + H(+). The protein operates within bacterial outer membrane biogenesis; LPS lipid A biosynthesis. Functionally, condensation of UDP-2,3-diacylglucosamine and 2,3-diacylglucosamine-1-phosphate to form lipid A disaccharide, a precursor of lipid A, a phosphorylated glycolipid that anchors the lipopolysaccharide to the outer membrane of the cell. In Pseudomonas aeruginosa (strain UCBPP-PA14), this protein is Lipid-A-disaccharide synthase.